Here is a 444-residue protein sequence, read N- to C-terminus: 3-phosphoshikimate 1-carboxyvinyltransferase (444 aa).

Residues K29, S30, and R34 each coordinate 3-phosphoshikimate. K29 serves as a coordination point for phosphoenolpyruvate. Positions 103 and 132 each coordinate phosphoenolpyruvate. 3-phosphoshikimate-binding residues include S177, Q179, D329, and K356. Q179 contributes to the phosphoenolpyruvate binding site. D329 serves as the catalytic Proton acceptor. Residues R360 and R402 each contribute to the phosphoenolpyruvate site.

This sequence belongs to the EPSP synthase family. In terms of assembly, monomer.

The protein localises to the cytoplasm. The catalysed reaction is 3-phosphoshikimate + phosphoenolpyruvate = 5-O-(1-carboxyvinyl)-3-phosphoshikimate + phosphate. It participates in metabolic intermediate biosynthesis; chorismate biosynthesis; chorismate from D-erythrose 4-phosphate and phosphoenolpyruvate: step 6/7. Catalyzes the transfer of the enolpyruvyl moiety of phosphoenolpyruvate (PEP) to the 5-hydroxyl of shikimate-3-phosphate (S3P) to produce enolpyruvyl shikimate-3-phosphate and inorganic phosphate. The chain is 3-phosphoshikimate 1-carboxyvinyltransferase from Prochlorococcus marinus (strain NATL2A).